Reading from the N-terminus, the 246-residue chain is 3'(2'),5'-bisphosphate nucleotidase CysQ (246 aa).

Mg(2+) contacts are provided by Glu-64, Asp-83, Leu-85, Asp-86, and Asp-205. Residue Glu-64 coordinates substrate. Substrate is bound by residues 85–88 (LDGT) and Asp-205.

It belongs to the inositol monophosphatase superfamily. CysQ family. Mg(2+) serves as cofactor.

Its subcellular location is the cell inner membrane. It catalyses the reaction adenosine 3',5'-bisphosphate + H2O = AMP + phosphate. Functionally, converts adenosine-3',5'-bisphosphate (PAP) to AMP. The polypeptide is 3'(2'),5'-bisphosphate nucleotidase CysQ (Escherichia coli O157:H7).